Reading from the N-terminus, the 179-residue chain is Coiled-coil domain-containing protein 32 (179 aa).

The segment at 36 to 65 is disordered; it reads DNAFSDSFMDSHPAGESHTAAADSAVQPAG. Positions 75-98 form a coiled coil; sequence EVYLASLEKKLRRIKGLNEEVTSK. The tract at residues 158-179 is disordered; that stretch reads LIPPESQAEKPEAGDKPAAAEQ.

Interacts with AP2S1; the interaction is direct and mediates association with adaptor protein complex 2 (AP-2).

It is found in the membrane. The protein localises to the coated pit. Regulates clathrin-mediated endocytsois of cargos such as transferrin probably through the association and modulation of adaptor protein complex 2 (AP-2). Has a role in ciliogenesis. Required for proper cephalic and left/right axis development. In Mus musculus (Mouse), this protein is Coiled-coil domain-containing protein 32 (Ccdc32).